The following is a 445-amino-acid chain: Protein trichome berefringence-like 7 (445 aa).

The helical; Signal-anchor for type II membrane protein transmembrane segment at 69–89 (IIAGTIVSFLVIIAGGYLYVV) threads the bilayer. The short motif at 188-190 (GDS) is the GDS motif element. The DCXHWCLPGXXDXWN motif motif lies at 418–432 (DCSHWCLPGVPDIWN).

Belongs to the PC-esterase family. TBL subfamily.

It is found in the membrane. In terms of biological role, may act as a bridging protein that binds pectin and other cell wall polysaccharides. Probably involved in maintaining esterification of pectins. May be involved in the specific O-acetylation of cell wall polymers. In Arabidopsis thaliana (Mouse-ear cress), this protein is Protein trichome berefringence-like 7 (TBL7).